A 459-amino-acid polypeptide reads, in one-letter code: Elongation factor 1-alpha (459 aa).

N,N,N-trimethylglycine is present on Gly-2. Position 3 is an N6,N6-dimethyllysine; alternate (Lys-3). Lys-3 carries the N6-methyllysine; alternate modification. The tr-type G domain occupies 5 to 240 (KTHVNVVVIG…DAVDPPTRPS (236 aa)). The segment at 14–21 (GHVDSGKS) is G1. 14 to 21 (GHVDSGKS) is a GTP binding site. At Lys-30 the chain carries N6-methyllysine. The G2 stretch occupies residues 70–74 (VITID). Residue Lys-79 is modified to N6,N6,N6-trimethyllysine. The interval 91 to 94 (DAPG) is G3. GTP-binding positions include 91–95 (DAPGH) and 153–156 (NKMD). Residues 153–156 (NKMD) are G4. Positions 192-194 (SGW) are G5. N6,N6-dimethyllysine; alternate is present on Lys-316. An N6-methyllysine; alternate modification is found at Lys-316. At Lys-390 the chain carries N6-methyllysine.

The protein belongs to the TRAFAC class translation factor GTPase superfamily. Classic translation factor GTPase family. EF-Tu/EF-1A subfamily.

Its subcellular location is the cytoplasm. Functionally, this protein promotes the GTP-dependent binding of aminoacyl-tRNA to the A-site of ribosomes during protein biosynthesis. This Blastobotrys adeninivorans (Yeast) protein is Elongation factor 1-alpha (TEF).